The following is an 837-amino-acid chain: Semaphorin-4B (837 aa).

The first 43 residues, 1 to 43, serve as a signal peptide directing secretion; sequence MLRTAMGLRSWLAAPWGALPPRPPLLLLLLLLLLLQPPPPTWA. At 44–717 the chain is on the extracellular side; that stretch reads LSPRISLPLG…WGADRSYWKE (674 aa). The 477-residue stretch at 47–523 folds into the Sema domain; the sequence is RISLPLGSEE…SHSGVVQVPM (477 aa). N-linked (GlcNAc...) asparagine glycosylation is found at N69 and N96. Intrachain disulfides connect C120–C131 and C149–C158. N165 carries an N-linked (GlcNAc...) asparagine glycan. 2 disulfides stabilise this stretch: C286/C399 and C310/C359. N-linked (GlcNAc...) asparagine glycosylation is found at N410 and N525. The 55-residue stretch at 525 to 579 folds into the PSI domain; it reads NCSLYRSCGDCLLARDPYCAWSGSSCKHVSLYQPQLATRPWIQDIEGASAKDLCS. Intrachain disulfides connect C526–C543 and C611–C656. The region spanning 604–663 is the Ig-like C2-type domain; the sequence is NTVNTLACPLLSNLATRLWLRNGAPVNASASCHVLPTGDLLLVGTQQLGEFQCWSLEEGF. N-linked (GlcNAc...) asparagine glycosylation occurs at N630. Residues 718-738 form a helical membrane-spanning segment; sequence FLVMCTLFVLAVLLPVLFLLY. Over 739-837 the chain is Cytoplasmic; it reads RHRNSMKVFL…LGSEIRDSVV (99 aa). The segment at 767–805 is disordered; it reads PETRPLNGLGPPSTPLDHRGYQSLSDSPPGSRVFTESEK. Phosphoserine is present on residues S793, S818, and S830.

This sequence belongs to the semaphorin family.

It is found in the membrane. Its function is as follows. Inhibits axonal extension by providing local signals to specify territories inaccessible for growing axons. The protein is Semaphorin-4B of Homo sapiens (Human).